Reading from the N-terminus, the 588-residue chain is Snake venom 5'-nucleotidase (588 aa).

Residues 1–40 form the signal peptide; that stretch reads MQTPKRRRGAQGCPRSSPSPPLLLLVRAVWFCAALSVAAG. Zn(2+) is bound by residues Asp51 and His53. The cysteines at positions 66 and 71 are disulfide-linked. Positions 99 and 131 each coordinate Zn(2+). N-linked (GlcNAc...) asparagine glycosylation occurs at Asn167. Zn(2+)-binding residues include His234 and His257. N-linked (GlcNAc...) asparagine glycosylation is found at Asn347 and Asn361. 2 disulfide bridges follow: Cys367-Cys372 and Cys379-Cys401. Arg368 contributes to the AMP binding site. AMP-binding residues include Asn404 and Arg409. Asn418 carries N-linked (GlcNAc...) asparagine glycosylation. An AMP-binding site is contributed by Phe432. Cys491 and Cys494 form a disulfide bridge. Residues Phe515 and Asp521 each contribute to the AMP site. Residue Asn532 is glycosylated (N-linked (GlcNAc...) asparagine). Ser564 carries the GPI-anchor amidated serine lipid modification. The propeptide at 565-588 is removed in mature form; that stretch reads AGTLFQAQLFLTWGLCVSLLYFIL.

Belongs to the 5'-nucleotidase family. It depends on Zn(2+) as a cofactor. In terms of processing, venom 5'-nucleotidases (or a part thereof) may be released into the venom via exosome-like vesicles. They may be attached via a GPI anchor to the membrane of these vesicles. Soluble forms of 5'-nucleotidase might be released by cleavage of the ectodomain in the exosome-like vesicles or venom gland cells. As to expression, expressed by the venom gland.

The protein resides in the membrane. It catalyses the reaction a ribonucleoside 5'-phosphate + H2O = a ribonucleoside + phosphate. Hydrolyzes nucleotides into nucleosides. Snake venom 5'-nucleotidases are widely distributed among venomous snake taxa, but there is a lack of information about their biological activities. They have been shown to inhibit platelet aggregation. This effect may be due to the liberation of inhibitory AMP or adenosine by its action on ADP released upon initiation of aggregation. Venom 5'-nucleotidases are also known to synergistically act in vivo with other toxins like ADPases, phospholipases, and disintegrins to exert a more pronounced anti-coagulant effect. The polypeptide is Snake venom 5'-nucleotidase (Crotalus adamanteus (Eastern diamondback rattlesnake)).